The following is a 531-amino-acid chain: Achacin (531 aa).

Residues 1-22 form the signal peptide; sequence MLLLNSALFILCLVCWLPGTSS. Positions 23 to 29 are excised as a propeptide; the sequence is SRVLTRR. Asparagine 112, asparagine 150, asparagine 308, and asparagine 392 each carry an N-linked (GlcNAc...) asparagine glycan.

This sequence to A.kurodai aplysianin-A. Homodimer. As to expression, collar tissue.

Antibacterial glycoprotein. This is Achacin from Lissachatina fulica (Giant African land snail).